We begin with the raw amino-acid sequence, 516 residues long: Bifunctional purine biosynthesis protein PurH (516 aa).

The MGS-like domain occupies 1–150 (MSDDRKQIKR…KNHPSVAVVV (150 aa)).

Belongs to the PurH family.

It catalyses the reaction (6R)-10-formyltetrahydrofolate + 5-amino-1-(5-phospho-beta-D-ribosyl)imidazole-4-carboxamide = 5-formamido-1-(5-phospho-D-ribosyl)imidazole-4-carboxamide + (6S)-5,6,7,8-tetrahydrofolate. The catalysed reaction is IMP + H2O = 5-formamido-1-(5-phospho-D-ribosyl)imidazole-4-carboxamide. It functions in the pathway purine metabolism; IMP biosynthesis via de novo pathway; 5-formamido-1-(5-phospho-D-ribosyl)imidazole-4-carboxamide from 5-amino-1-(5-phospho-D-ribosyl)imidazole-4-carboxamide (10-formyl THF route): step 1/1. It participates in purine metabolism; IMP biosynthesis via de novo pathway; IMP from 5-formamido-1-(5-phospho-D-ribosyl)imidazole-4-carboxamide: step 1/1. This is Bifunctional purine biosynthesis protein PurH from Corynebacterium ammoniagenes (Brevibacterium ammoniagenes).